We begin with the raw amino-acid sequence, 314 residues long: DNA-directed RNA polymerase subunit alpha (314 aa).

The tract at residues 1–228 (MIEIEKPRIE…EHLNIFVGLT (228 aa)) is alpha N-terminal domain (alpha-NTD). Positions 245–314 (KEKVLEMSIE…DLGLGLRKED (70 aa)) are alpha C-terminal domain (alpha-CTD).

It belongs to the RNA polymerase alpha chain family. As to quaternary structure, homodimer. The RNAP catalytic core consists of 2 alpha, 1 beta, 1 beta' and 1 omega subunit. When a sigma factor is associated with the core the holoenzyme is formed, which can initiate transcription.

It catalyses the reaction RNA(n) + a ribonucleoside 5'-triphosphate = RNA(n+1) + diphosphate. Its function is as follows. DNA-dependent RNA polymerase catalyzes the transcription of DNA into RNA using the four ribonucleoside triphosphates as substrates. The chain is DNA-directed RNA polymerase subunit alpha from Staphylococcus saprophyticus subsp. saprophyticus (strain ATCC 15305 / DSM 20229 / NCIMB 8711 / NCTC 7292 / S-41).